Here is a 146-residue protein sequence, read N- to C-terminus: Hemoglobin subunit beta (146 aa).

Residues 2-146 (HWTADEKQLI…VAHALALGYH (145 aa)) form the Globin domain. Heme b is bound by residues His-63 and His-92.

The protein belongs to the globin family. In terms of assembly, heterotetramer of two alpha chains and two beta chains. In terms of tissue distribution, red blood cells.

Functionally, involved in oxygen transport from the lung to the various peripheral tissues. The chain is Hemoglobin subunit beta (HBB) from Chrysemys picta bellii (Western painted turtle).